Here is a 131-residue protein sequence, read N- to C-terminus: 23S rRNA-specific endonuclease VapC20 (131 aa).

A PINc domain is found at 2-125 (IFVDTSFWAA…FDGDFSAAGF (124 aa)). Positions 5 and 98 each coordinate Mg(2+).

The protein belongs to the PINc/VapC protein family. Mg(2+) is required as a cofactor.

In terms of biological role, toxic component of a type II toxin-antitoxin (TA) system. An endoribonuclease that cleaves 23S rRNA in the sarcin-ricin loop (SRL). The SRL sequence is highly conserved and is implicated in GTP hydrolysis by EF-Tu and EF-G. Acts on purified ribosomes but not on isolated RNA. Its toxic effect is neutralized by coexpression with cognate antitoxin VapB20. This chain is 23S rRNA-specific endonuclease VapC20 (vapC20), found in Mycobacterium tuberculosis (strain CDC 1551 / Oshkosh).